Consider the following 195-residue polypeptide: MEATVVATTQLTQDSFYQPFSESLEKQDRECKVLKRQRSSSPELLRCKRRLTFNGLGYTIPQQQPMAVARRNERERNRVKQVNMGFQTLRQHVPNGAANKKMSKVETLRSAVEYIRALQQLLDEHDAVSAVLQCGVPSPSVSNAYSAGPESPHSAYSSDEGSYEHLSSEEQELLDFTTWFDRYESGASMATKDWC.

Residues 66–118 (MAVARRNERERNRVKQVNMGFQTLRQHVPNGAANKKMSKVETLRSAVEYIRAL) enclose the bHLH domain. The disordered stretch occupies residues 141 to 164 (VSNAYSAGPESPHSAYSSDEGSYE).

In terms of assembly, efficient DNA binding requires dimerization with another bHLH protein. In the 24 hours embryo, expressed in hindbrain close to the anterior and posterior boundaries of rhombomeres 2-6 and in ventral cells close to the floor plate of most rhombomeres. Also expressed in the telencephalon, diencephalon, tegmentum and spinal cord at sites distinct from those expressing ascl1a. Not expressed in the adenohypophysis.

It is found in the nucleus. Functionally, transcriptional regulator. May mediate transcription activation by binding to the E box-containing promoter. Involved in neurogenesis. Involved in maintaining rhombomere boundaries in the hindbrain, probably via up-regulation of delta expression. May mediate transcription activation by binding to the E box-containing promoter. In Danio rerio (Zebrafish), this protein is Achaete-scute homolog 1b.